Here is a 543-residue protein sequence, read N- to C-terminus: NADH-ubiquinone oxidoreductase chain 4 (543 aa).

14 helical membrane-spanning segments follow: residues 5-25 (FLMF…IIWS), 84-104 (VVAF…YILF), 129-149 (VDGI…IALM), 161-181 (SYLI…LVLD), 182-202 (ILLF…LIGL), 213-233 (FYIF…ILTM), 254-274 (IQIF…PTIF), 287-307 (PLGG…YGIF), 321-341 (YTYI…FSTL), 350-370 (IAYS…SNTI), 377-397 (ILLG…VGGV), 416-436 (MAPL…GVPL), 456-476 (LLGL…IFLF), and 501-521 (FYAL…PSII).

The protein belongs to the complex I subunit 4 family.

It is found in the mitochondrion membrane. The enzyme catalyses a ubiquinone + NADH + 5 H(+)(in) = a ubiquinol + NAD(+) + 4 H(+)(out). Core subunit of the mitochondrial membrane respiratory chain NADH dehydrogenase (Complex I) that is believed to belong to the minimal assembly required for catalysis. Complex I functions in the transfer of electrons from NADH to the respiratory chain. The immediate electron acceptor for the enzyme is believed to be ubiquinone. The chain is NADH-ubiquinone oxidoreductase chain 4 (ndh-4) from Neurospora crassa (strain ATCC 24698 / 74-OR23-1A / CBS 708.71 / DSM 1257 / FGSC 987).